The primary structure comprises 111 residues: Succinate dehydrogenase assembly factor 1B, mitochondrial (111 aa).

It belongs to the complex I LYR family. SDHAF1 subfamily. Interacts with the iron-sulfur protein subunit within the SDH catalytic dimer.

It localises to the mitochondrion matrix. Its function is as follows. Plays an essential role in the assembly of succinate dehydrogenase (SDH), an enzyme complex (also referred to as respiratory complex II) that is a component of both the tricarboxylic acid (TCA) cycle and the mitochondrial electron transport chain, and which couples the oxidation of succinate to fumarate with the reduction of ubiquinone (coenzyme Q) to ubiquinol. Promotes maturation of the iron-sulfur protein subunit of the SDH catalytic dimer, protecting it from the deleterious effects of oxidants. May act together with SDHAF3. The polypeptide is Succinate dehydrogenase assembly factor 1B, mitochondrial (Dictyostelium discoideum (Social amoeba)).